The primary structure comprises 216 residues: Ribosomal RNA small subunit methyltransferase G (216 aa).

S-adenosyl-L-methionine is bound by residues G83, M88, 134–135, and R149; that span reads VE.

This sequence belongs to the methyltransferase superfamily. RNA methyltransferase RsmG family.

Its subcellular location is the cytoplasm. The enzyme catalyses guanosine(527) in 16S rRNA + S-adenosyl-L-methionine = N(7)-methylguanosine(527) in 16S rRNA + S-adenosyl-L-homocysteine. Specifically methylates the N7 position of guanine in position 527 of 16S rRNA. This is Ribosomal RNA small subunit methyltransferase G from Pseudomonas putida (strain GB-1).